Here is a 245-residue protein sequence, read N- to C-terminus: 3-deoxy-manno-octulosonate cytidylyltransferase (245 aa).

This sequence belongs to the KdsB family.

The protein localises to the cytoplasm. It carries out the reaction 3-deoxy-alpha-D-manno-oct-2-ulosonate + CTP = CMP-3-deoxy-beta-D-manno-octulosonate + diphosphate. It functions in the pathway nucleotide-sugar biosynthesis; CMP-3-deoxy-D-manno-octulosonate biosynthesis; CMP-3-deoxy-D-manno-octulosonate from 3-deoxy-D-manno-octulosonate and CTP: step 1/1. Its pathway is bacterial outer membrane biogenesis; lipopolysaccharide biosynthesis. Functionally, activates KDO (a required 8-carbon sugar) for incorporation into bacterial lipopolysaccharide in Gram-negative bacteria. In Acidobacterium capsulatum (strain ATCC 51196 / DSM 11244 / BCRC 80197 / JCM 7670 / NBRC 15755 / NCIMB 13165 / 161), this protein is 3-deoxy-manno-octulosonate cytidylyltransferase.